The sequence spans 408 residues: Tryptophan synthase beta chain (408 aa).

At Lys-90 the chain carries N6-(pyridoxal phosphate)lysine.

Belongs to the TrpB family. As to quaternary structure, tetramer of two alpha and two beta chains. The cofactor is pyridoxal 5'-phosphate.

The enzyme catalyses (1S,2R)-1-C-(indol-3-yl)glycerol 3-phosphate + L-serine = D-glyceraldehyde 3-phosphate + L-tryptophan + H2O. It participates in amino-acid biosynthesis; L-tryptophan biosynthesis; L-tryptophan from chorismate: step 5/5. Functionally, the beta subunit is responsible for the synthesis of L-tryptophan from indole and L-serine. The polypeptide is Tryptophan synthase beta chain (Bacillus licheniformis (strain ATCC 14580 / DSM 13 / JCM 2505 / CCUG 7422 / NBRC 12200 / NCIMB 9375 / NCTC 10341 / NRRL NRS-1264 / Gibson 46)).